Here is a 68-residue protein sequence, read N- to C-terminus: Protein transport protein Sec61 subunit gamma (68 aa).

The Cytoplasmic segment spans residues 1 to 32; that stretch reads MDQVMQFVEPSRQFVKDSIRLVKRCTKPDRKE. A helical transmembrane segment spans residues 33–61; sequence FQKVAMATAIGFAIMGFIGFFVKLIHIPI. Residues 62–68 are Extracellular-facing; it reads NNIIVGG.

It belongs to the SecE/SEC61-gamma family. In terms of assembly, the SEC61 channel-forming translocon complex consists of channel-forming core components SEC61A1, SEC61B and SEC61G and different auxiliary components such as SEC62 and SEC63. The SEC61 channel associates with the multi-pass translocon (MPT) complex.

Its subcellular location is the endoplasmic reticulum membrane. Its function is as follows. Component of SEC61 channel-forming translocon complex that mediates transport of signal peptide-containing precursor polypeptides across the endoplasmic reticulum (ER). Forms a ribosome receptor and a gated pore in the ER membrane, both functions required for cotranslational translocation of nascent polypeptides. The SEC61 channel is also involved in ER membrane insertion of transmembrane proteins: it mediates membrane insertion of the first few transmembrane segments of proteins, while insertion of subsequent transmembrane regions of multi-pass membrane proteins is mediated by the multi-pass translocon (MPT) complex. This chain is Protein transport protein Sec61 subunit gamma (sec61g), found in Harpagifer antarcticus (Antarctic spiny plunderfish).